The following is an 88-amino-acid chain: Enticin (88 aa).

An N-terminal signal peptide occupies residues 1–19 (MKTALPLLLLTCLVAAVQS). 3 disulfides stabilise this stretch: C25/C33, C40/C52, and C59/C67. Positions 69–88 (REQSQLNHDHLNNHTTTQQP) are excised as a propeptide.

Binds to attractin and temptin.

The protein resides in the secreted. In terms of biological role, a component of the complex of water-borne protein pheromones that stimulates attraction and mating behavior. This chain is Enticin, found in Aplysia californica (California sea hare).